Reading from the N-terminus, the 84-residue chain is Small ribosomal subunit protein bS20 (84 aa).

The protein belongs to the bacterial ribosomal protein bS20 family.

Binds directly to 16S ribosomal RNA. This Ligilactobacillus salivarius (strain UCC118) (Lactobacillus salivarius) protein is Small ribosomal subunit protein bS20.